The sequence spans 144 residues: Antigenic protein SchS21 (144 aa).

Asn-36 carries N-linked (GlcNAc...) asparagine glycosylation. The igE-binding epitope stretch occupies residues 91–105 (VKQMWPAESRKPMSG).

Homodimer. The cofactor is Mg(2+).

The protein localises to the secreted. In terms of biological role, has exodeoxyribonuclease activity with lambda-DNA and salmon testes dsDNA. No activity with circular plasmid DNA. The physiological role of this enzyme may be to degrade environmental DNA, and thus mobilize nitrogen for uptake. The sequence is that of Antigenic protein SchS21 from Stachybotrys chartarum (Toxic black mold).